We begin with the raw amino-acid sequence, 267 residues long: Type II pantothenate kinase (267 aa).

6 to 13 (DAGGTLIK) is an ATP binding site. E70 serves as the catalytic Proton acceptor. ATP contacts are provided by residues T99, 121 to 125 (GGMIQ), Y137, and S225.

It belongs to the type II pantothenate kinase family. As to quaternary structure, homodimer.

Its subcellular location is the cytoplasm. The enzyme catalyses (R)-pantothenate + ATP = (R)-4'-phosphopantothenate + ADP + H(+). It functions in the pathway cofactor biosynthesis; coenzyme A biosynthesis; CoA from (R)-pantothenate: step 1/5. Its function is as follows. Catalyzes the phosphorylation of pantothenate (Pan), the first step in CoA biosynthesis. The polypeptide is Type II pantothenate kinase (Staphylococcus aureus (strain bovine RF122 / ET3-1)).